The following is a 43-amino-acid chain: Thaumatin-like protein 1 (43 aa).

It belongs to the thaumatin family.

This Glebionis coronaria (Crown daisy) protein is Thaumatin-like protein 1.